Consider the following 792-residue polypeptide: Probable G-protein coupled receptor 156 (792 aa).

The Extracellular segment spans residues 1–49 (MEPEINCSEFCDSFPGQELDRRPLHDLCKTTITDSQHGSADISPLSPAL). N-linked (GlcNAc...) asparagine glycosylation is present at asparagine 6. Residues 50-70 (LGVIWTFLSCGLLLVLFFLAF) form a helical membrane-spanning segment. Over 71–86 (TIRCRKNRIVKMSSPN) the chain is Cytoplasmic. A helical membrane pass occupies residues 87-107 (LNIVTLLGSCLTYSSAYLFGI). Residues 108–118 (QDALVGSSVEA) lie on the Extracellular side of the membrane. Residues 119 to 139 (LIQTRLSLLCIGTTLVFGPIL) traverse the membrane as a helical segment. Residues 140-164 (GKSWRLYKVFTQRVPDKRVIIKDLQ) lie on the Cytoplasmic side of the membrane. The helical transmembrane segment at 165–185 (LLGLVAALVVADVILLVTWVL) threads the bilayer. Residues 186 to 222 (TDPIQCLQILGVSMKVTGRDVSCSLTNTHFCASRYSD) are Extracellular-facing. Residues 223–243 (VWIALVLGCKGLLLLYGAYLA) form a helical membrane-spanning segment. Residues 244-257 (GLTNHVSSPPVNQS) are Cytoplasmic-facing. The chain crosses the membrane as a helical span at residues 258–278 (LTIMVGVNLLLLTAGLLFVVT). The Extracellular segment spans residues 279–287 (RYLHSWPNL). Residues 288 to 308 (VFGLTSGGIFVCTTTVNCCVF) traverse the membrane as a helical segment. The Cytoplasmic segment spans residues 309–792 (LPQLRQRKAF…FKDDLKPTLV (484 aa)). Residues 354–390 (EXSCMERLLTEKNAVIESLQEQVSNAKEKLVKLMSAE) adopt a coiled-coil conformation. 3 disordered regions span residues 407 to 457 (GGPA…KYDM), 469 to 516 (GCSQ…EVLP), and 538 to 704 (DLGT…QRQP). Positions 422-434 (AAAEDSLPASAAS) are enriched in low complexity. 2 stretches are compositionally biased toward basic and acidic residues: residues 443–457 (SRRD…KYDM) and 474–486 (PKAE…ERGN). The segment covering 554-567 (PWKSNTSGSPQKLS) has biased composition (polar residues). A compositionally biased stretch (basic residues) spans 578 to 589 (VRRRRAAQRARS). Positions 602-619 (QANNTVSGSQNGLIVQNR) are enriched in polar residues. A compositionally biased stretch (basic and acidic residues) spans 620 to 635 (DSPRLDHHNARSKEPR). The span at 675–704 (PRQPSASAPAQSSTAPCLSSXPALPRQRQP) shows a compositional bias: low complexity.

Belongs to the G-protein coupled receptor 3 family. GABA-B receptor subfamily. As to expression, widely expressed throughout the brain and is particularly dense in the olfactory tubercles, islands of Calleja, nucleus accumbens, piriform cortex and all fields of the hippocampus.

The protein resides in the cell membrane. Orphan G-protein coupled receptor involved in the regulation of hair cell orientation in mechanosensory organs of the inner ear. It is required to trigger a 180 degree reversal in hair cell orientation, creating a virtual line of polarity reversal (LPR) across which stereociliary bundles are arranged in opposite orientations. The protein is Probable G-protein coupled receptor 156 (Gpr156) of Rattus norvegicus (Rat).